The sequence spans 451 residues: Cytochrome c biogenesis protein CcsB (451 aa).

3 helical membrane-spanning segments follow: residues 30 to 50 (LRLAIVLLLAIALFSISGTVI), 89 to 109 (TWWFLSLLVLFGTSLTTCTFT), and 175 to 195 (IGPIVVHAAMLIILGGAIWGA).

The protein belongs to the Ccs1/CcsB family. May interact with CcsA.

Its subcellular location is the cellular thylakoid membrane. In terms of biological role, required during biogenesis of c-type cytochromes (cytochrome c6 and cytochrome f) at the step of heme attachment. This chain is Cytochrome c biogenesis protein CcsB, found in Crocosphaera subtropica (strain ATCC 51142 / BH68) (Cyanothece sp. (strain ATCC 51142)).